A 453-amino-acid polypeptide reads, in one-letter code: Ribose 1,5-bisphosphate phosphokinase PhnN (453 aa).

The segment at 1 to 21 (MHGSTGFVQGTRPAGDQADPL) is disordered. The interval 1 to 271 (MHGSTGFVQG…SGQGERASLP (271 aa)) is unknown. A ribose 1,5-bisphosphokinase region spans residues 272–453 (HSGRIFFCVG…KLLDILRQAK (182 aa)).

It in the C-terminal section; belongs to the ribose 1,5-bisphosphokinase family.

The enzyme catalyses alpha-D-ribose 1,5-bisphosphate + ATP = 5-phospho-alpha-D-ribose 1-diphosphate + ADP. It functions in the pathway metabolic intermediate biosynthesis; 5-phospho-alpha-D-ribose 1-diphosphate biosynthesis; 5-phospho-alpha-D-ribose 1-diphosphate from D-ribose 5-phosphate (route II): step 3/3. In terms of biological role, catalyzes the phosphorylation of ribose 1,5-bisphosphate to 5-phospho-D-ribosyl alpha-1-diphosphate (PRPP). The sequence is that of Ribose 1,5-bisphosphate phosphokinase PhnN (phnN) from Janthinobacterium sp. (strain Marseille) (Minibacterium massiliensis).